The sequence spans 131 residues: Small ribosomal subunit protein bS6 (131 aa).

Positions 100–131 are disordered; it reads SPMVKAKDERRERREDFANETSDDADAGDSEE. The span at 104–116 shows a compositional bias: basic and acidic residues; the sequence is KAKDERRERREDF. Residues 120–131 show a composition bias toward acidic residues; sequence TSDDADAGDSEE.

The protein belongs to the bacterial ribosomal protein bS6 family.

In terms of biological role, binds together with bS18 to 16S ribosomal RNA. This is Small ribosomal subunit protein bS6 from Erwinia tasmaniensis (strain DSM 17950 / CFBP 7177 / CIP 109463 / NCPPB 4357 / Et1/99).